Consider the following 197-residue polypeptide: Thymidylate kinase (197 aa).

7–14 (GIDGSGKS) is an ATP binding site.

It belongs to the thymidylate kinase family.

It catalyses the reaction dTMP + ATP = dTDP + ADP. Its function is as follows. Phosphorylation of dTMP to form dTDP in both de novo and salvage pathways of dTTP synthesis. This chain is Thymidylate kinase, found in Thermotoga petrophila (strain ATCC BAA-488 / DSM 13995 / JCM 10881 / RKU-1).